Here is a 229-residue protein sequence, read N- to C-terminus: Cytochrome c oxidase subunit 2 (229 aa).

At 1 to 26 (MATWSNLGLQDSASPLMEQLNFFHDH) the chain is on the mitochondrial intermembrane side. The chain crosses the membrane as a helical span at residues 27–48 (TLLILIMITILVGYLMLMLFFN). Over 49-62 (KFTNRFLLHGQTIE) the chain is Mitochondrial matrix. The chain crosses the membrane as a helical span at residues 63–82 (IIWTILPAIVLMFIALPSLR). Over 83–229 (ILYLLDEINS…IKWITAMNSN (147 aa)) the chain is Mitochondrial intermembrane. Cu cation contacts are provided by His-161, Cys-196, Glu-198, Cys-200, His-204, and Met-207. Glu-198 is a Mg(2+) binding site.

It belongs to the cytochrome c oxidase subunit 2 family. Component of the cytochrome c oxidase (complex IV, CIV), a multisubunit enzyme composed of a catalytic core of 3 subunits and several supernumerary subunits. The complex exists as a monomer or a dimer and forms supercomplexes (SCs) in the inner mitochondrial membrane with ubiquinol-cytochrome c oxidoreductase (cytochrome b-c1 complex, complex III, CIII). The cofactor is Cu cation.

The protein localises to the mitochondrion inner membrane. The enzyme catalyses 4 Fe(II)-[cytochrome c] + O2 + 8 H(+)(in) = 4 Fe(III)-[cytochrome c] + 2 H2O + 4 H(+)(out). Its function is as follows. Component of the cytochrome c oxidase, the last enzyme in the mitochondrial electron transport chain which drives oxidative phosphorylation. The respiratory chain contains 3 multisubunit complexes succinate dehydrogenase (complex II, CII), ubiquinol-cytochrome c oxidoreductase (cytochrome b-c1 complex, complex III, CIII) and cytochrome c oxidase (complex IV, CIV), that cooperate to transfer electrons derived from NADH and succinate to molecular oxygen, creating an electrochemical gradient over the inner membrane that drives transmembrane transport and the ATP synthase. Cytochrome c oxidase is the component of the respiratory chain that catalyzes the reduction of oxygen to water. Electrons originating from reduced cytochrome c in the intermembrane space (IMS) are transferred via the dinuclear copper A center (CU(A)) of subunit 2 and heme A of subunit 1 to the active site in subunit 1, a binuclear center (BNC) formed by heme A3 and copper B (CU(B)). The BNC reduces molecular oxygen to 2 water molecules using 4 electrons from cytochrome c in the IMS and 4 protons from the mitochondrial matrix. The sequence is that of Cytochrome c oxidase subunit 2 (COII) from Simulium vittatum (Striped black fly).